We begin with the raw amino-acid sequence, 476 residues long: Bifunctional protein HldE (476 aa).

The interval 1–318 (MKPTLPNYDQ…AEAIHGSQDS (318 aa)) is ribokinase. ATP is bound at residue 195–198 (NMLE). Residue Asp-264 is part of the active site. The interval 344–476 (MTNGCFDILH…IIEAIKGGRG (133 aa)) is cytidylyltransferase.

The protein in the N-terminal section; belongs to the carbohydrate kinase PfkB family. It in the C-terminal section; belongs to the cytidylyltransferase family. In terms of assembly, homodimer.

It carries out the reaction D-glycero-beta-D-manno-heptose 7-phosphate + ATP = D-glycero-beta-D-manno-heptose 1,7-bisphosphate + ADP + H(+). The enzyme catalyses D-glycero-beta-D-manno-heptose 1-phosphate + ATP + H(+) = ADP-D-glycero-beta-D-manno-heptose + diphosphate. It functions in the pathway nucleotide-sugar biosynthesis; ADP-L-glycero-beta-D-manno-heptose biosynthesis; ADP-L-glycero-beta-D-manno-heptose from D-glycero-beta-D-manno-heptose 7-phosphate: step 1/4. Its pathway is nucleotide-sugar biosynthesis; ADP-L-glycero-beta-D-manno-heptose biosynthesis; ADP-L-glycero-beta-D-manno-heptose from D-glycero-beta-D-manno-heptose 7-phosphate: step 3/4. Its function is as follows. Catalyzes the phosphorylation of D-glycero-D-manno-heptose 7-phosphate at the C-1 position to selectively form D-glycero-beta-D-manno-heptose-1,7-bisphosphate. In terms of biological role, catalyzes the ADP transfer from ATP to D-glycero-beta-D-manno-heptose 1-phosphate, yielding ADP-D-glycero-beta-D-manno-heptose. The protein is Bifunctional protein HldE of Aliivibrio fischeri (strain MJ11) (Vibrio fischeri).